Reading from the N-terminus, the 213-residue chain is Putative 3-methyladenine DNA glycosylase (213 aa).

It belongs to the DNA glycosylase MPG family.

This chain is Putative 3-methyladenine DNA glycosylase, found in Paraburkholderia phytofirmans (strain DSM 17436 / LMG 22146 / PsJN) (Burkholderia phytofirmans).